A 126-amino-acid polypeptide reads, in one-letter code: MKINKKTIGGFLLIVFGISVFFGGGSFGFIIPLAIGSLMTYAGIKRFAAGKTITGIIVGGIGAIMLICSLPFVVGIALAAAMVYYGWKLMKNGSADNGVSSFDPEPASAAYQSHFDDEWEEFLKKK.

The next 2 helical transmembrane spans lie at phenylalanine 11–isoleucine 31 and isoleucine 56–isoleucine 76.

It is found in the cell membrane. This is Protein LiaI (liaI) from Bacillus subtilis (strain 168).